A 195-amino-acid polypeptide reads, in one-letter code: Imidazoleglycerol-phosphate dehydratase (195 aa).

It belongs to the imidazoleglycerol-phosphate dehydratase family.

Its subcellular location is the cytoplasm. It catalyses the reaction D-erythro-1-(imidazol-4-yl)glycerol 3-phosphate = 3-(imidazol-4-yl)-2-oxopropyl phosphate + H2O. The protein operates within amino-acid biosynthesis; L-histidine biosynthesis; L-histidine from 5-phospho-alpha-D-ribose 1-diphosphate: step 6/9. The sequence is that of Imidazoleglycerol-phosphate dehydratase from Deinococcus radiodurans (strain ATCC 13939 / DSM 20539 / JCM 16871 / CCUG 27074 / LMG 4051 / NBRC 15346 / NCIMB 9279 / VKM B-1422 / R1).